The chain runs to 157 residues: MGFPKVERLLINYKTLDEFKKFKGCGAQELSMLEELQANIIENDSESPFYGIYYGGSLIARMSLYMKRNGGEPFEITGTYLELYKLEVLPNFQKQGFGEMLVNYAKGLQFPIKTIARIHSAGFWDKLNFQPVSVPDGDFYVWHPETNLNAVTNEESA.

The N-acetyltransferase domain occupies 9–146; sequence LLINYKTLDE…GDFYVWHPET (138 aa).

This is an uncharacterized protein from Bacillus anthracis (strain CDC 684 / NRRL 3495).